We begin with the raw amino-acid sequence, 61 residues long: Small ribosomal subunit protein uS14 (61 aa).

Cysteine 24, cysteine 27, cysteine 40, and cysteine 43 together coordinate Zn(2+).

The protein belongs to the universal ribosomal protein uS14 family. Zinc-binding uS14 subfamily. As to quaternary structure, part of the 30S ribosomal subunit. Contacts proteins S3 and S10. Zn(2+) serves as cofactor.

Functionally, binds 16S rRNA, required for the assembly of 30S particles and may also be responsible for determining the conformation of the 16S rRNA at the A site. The protein is Small ribosomal subunit protein uS14 of Chloroflexus aurantiacus (strain ATCC 29364 / DSM 637 / Y-400-fl).